Here is a 130-residue protein sequence, read N- to C-terminus: Protein ApaG (130 aa).

Residues 3-127 (RALTRDIEVT…FSLDSPGLVR (125 aa)) enclose the ApaG domain.

The sequence is that of Protein ApaG from Sinorhizobium fredii (strain NBRC 101917 / NGR234).